Here is a 470-residue protein sequence, read N- to C-terminus: Putative multidrug resistance protein MdtD (470 aa).

Residues 1-11 are Periplasmic-facing; the sequence is MTELPDNTRWQ. The chain crosses the membrane as a helical span at residues 12-32; the sequence is LWIVAFGFFMQSLDTTIVNTA. Topologically, residues 33 to 48 are cytoplasmic; sequence LPSMAKSLGESPLHMH. The helical transmembrane segment at 49-69 threads the bilayer; sequence MVVVSYVLTVAVMLPASGWLA. Over 70–76 the chain is Periplasmic; the sequence is DKIGVRN. A helical transmembrane segment spans residues 77–97; it reads IFFAAIVLFTLGSLFCALSGT. The Cytoplasmic portion of the chain corresponds to 98–101; sequence LNQL. Residues 102-124 traverse the membrane as a helical segment; that stretch reads VLARVLQGVGGAMMVPVGRLTVM. At 125–137 the chain is on the periplasmic side; it reads KIVPRAQYMAAMT. Residues 138–158 traverse the membrane as a helical segment; sequence FVTLPGQIGPLLGPALGGVLV. Residues 159 to 164 lie on the Cytoplasmic side of the membrane; that stretch reads EYASWH. A helical transmembrane segment spans residues 165–185; sequence WIFLINIPVGIVGAMATFMLM. Residues 186–196 lie on the Periplasmic side of the membrane; that stretch reads PNYTIETRRFD. The helical transmembrane segment at 197–217 threads the bilayer; the sequence is LPGFLLLAIGMAVLTLALDGS. The Cytoplasmic portion of the chain corresponds to 218-224; it reads KSMGISP. The chain crosses the membrane as a helical span at residues 225 to 245; the sequence is WTLAGLAAGGAAAILLYLFHA. At 246–262 the chain is on the periplasmic side; it reads KKNSGALFSLRLFRTPT. A helical transmembrane segment spans residues 263 to 283; it reads FSLGLLGSFAGRIGSGMLPFM. The Cytoplasmic portion of the chain corresponds to 284 to 285; it reads TP. A helical transmembrane segment spans residues 286–306; that stretch reads VFLQIGLGFSPFHAGLMMIPM. The Periplasmic segment spans residues 307–341; that stretch reads VLGSMGMKRIVVQIVNRFGYRRVLVATTLGLALVS. The helical transmembrane segment at 342-362 threads the bilayer; sequence LLFMSVALLGWYYLLPLVLLL. The Cytoplasmic portion of the chain corresponds to 363-395; that stretch reads QGMVNSARFSSMNTLTLKDLPDTLASSGNSLLS. A helical membrane pass occupies residues 396–416; it reads MIMQLSMSIGVTIAGMLLGMF. Topologically, residues 417-430 are periplasmic; sequence GQQHIGIDSSATHH. A helical membrane pass occupies residues 431-451; it reads VFMYTWLCMAVIIALPAIIFA. Residues 452–470 lie on the Cytoplasmic side of the membrane; sequence RVPNDTQQNMVISRRKRSL.

Belongs to the major facilitator superfamily. TCR/Tet family.

Its subcellular location is the cell inner membrane. The chain is Putative multidrug resistance protein MdtD from Salmonella agona (strain SL483).